The chain runs to 209 residues: UPF0319 protein VFMJ11_1730 (209 aa).

The signal sequence occupies residues Met-1 to Ala-21.

Belongs to the UPF0319 family.

The polypeptide is UPF0319 protein VFMJ11_1730 (Aliivibrio fischeri (strain MJ11) (Vibrio fischeri)).